We begin with the raw amino-acid sequence, 276 residues long: Probable endonuclease 4 (276 aa).

Residues His-67, His-107, Glu-142, Asp-176, His-179, His-211, Asp-224, His-226, and Glu-256 each contribute to the Zn(2+) site.

The protein belongs to the AP endonuclease 2 family. Zn(2+) serves as cofactor.

The catalysed reaction is Endonucleolytic cleavage to 5'-phosphooligonucleotide end-products.. In terms of biological role, endonuclease IV plays a role in DNA repair. It cleaves phosphodiester bonds at apurinic or apyrimidinic (AP) sites, generating a 3'-hydroxyl group and a 5'-terminal sugar phosphate. This chain is Probable endonuclease 4, found in Methanosphaera stadtmanae (strain ATCC 43021 / DSM 3091 / JCM 11832 / MCB-3).